The sequence spans 215 residues: Osmoprotectant import permease protein OsmW (215 aa).

An ABC transmembrane type-1 domain is found at 18-202 (TFQHLWLVAL…LLAIVLDWLL (185 aa)). 6 helical membrane-spanning segments follow: residues 24–44 (LVALAVGLAIIIGVPLGVLIV), 51–73 (TPVLGAATLLLTIPSIALFGLMI), 78–100 (LIGHGIGVLPAVTAVFLYSLLPI), 132–152 (WVEIPMALPVIFGGIRTAVVM), 153–173 (NIGVMAIAAVIGAGGLGLLLL), and 183–203 (MLIAGALMICLLAIVLDWLLH).

The protein belongs to the binding-protein-dependent transport system permease family. In terms of assembly, the complex is composed of two ATP-binding proteins (OsmV), two transmembrane proteins (OsmW and OsmY) and a solute-binding protein (OsmX).

It localises to the cell inner membrane. Its function is as follows. Part of the OsmU ABC transporter complex, which is involved in the uptake of osmoprotectants such as choline-O-sulfate and glycine betaine. Probably responsible for the translocation of the substrate across the membrane. This is Osmoprotectant import permease protein OsmW (osmW) from Salmonella typhimurium (strain LT2 / SGSC1412 / ATCC 700720).